We begin with the raw amino-acid sequence, 472 residues long: Trigger factor (472 aa).

One can recognise a PPIase FKBP-type domain in the interval 172 to 257 (GDEVRFDFKG…IKEITSVKPQ (86 aa)). Polar residues-rich tracts occupy residues 439 to 449 (NQPKDTASTLS) and 461 to 472 (KTSNTKKVASKK). Residues 439–472 (NQPKDTASTLSKQEDKPKVAKAKTSNTKKVASKK) are disordered.

It belongs to the FKBP-type PPIase family. Tig subfamily.

It is found in the cytoplasm. It carries out the reaction [protein]-peptidylproline (omega=180) = [protein]-peptidylproline (omega=0). In terms of biological role, involved in protein export. Acts as a chaperone by maintaining the newly synthesized protein in an open conformation. Functions as a peptidyl-prolyl cis-trans isomerase. The protein is Trigger factor of Ureaplasma urealyticum serovar 10 (strain ATCC 33699 / Western).